The following is a 1234-amino-acid chain: Anion exchange protein 2 (1234 aa).

Residues 1–239 (MSSAPRRPAS…YNLQERRRIG (239 aa)) form a disordered region. The Cytoplasmic portion of the chain corresponds to 1–704 (MSSAPRRPAS…SDFRDALDPQ (704 aa)). Basic and acidic residues-rich tracts occupy residues 39–49 (LRTLGVERFEE) and 58–75 (GGEE…EYHR). 2 stretches are compositionally biased toward basic residues: residues 76–85 (QSSHHIHHPL) and 94–110 (RRRK…RRRP). Serine 113 bears the Phosphoserine mark. A compositionally biased stretch (acidic residues) spans 120 to 133 (TIEEGEEDEDEVGE). Phosphoserine occurs at positions 145, 171, and 173. Positions 207–216 (TAGGDDGGAA) are enriched in gly residues. At serine 240 the chain carries Phosphoserine. The residue at position 254 (threonine 254) is a Phosphothreonine. Residue lysine 271 is modified to N6-methyllysine. The segment at 287–315 (RKNAKGSTQAAREGREPGPTPRARPRAPH) is disordered. Residue serine 440 is modified to Phosphoserine. Residues 446-467 (SLLGHHHAQGTESDPHVTEPLI) are disordered. A run of 4 helical transmembrane segments spans residues 705 to 728 (CLAA…GLLG), 734 to 771 (LIGV…LLVF), 791 to 813 (VWIG…SFLV), and 823 to 843 (IFAF…LIKI). The segment at 705 to 1234 (CLAAVIFIYF…DEYNEMPMPV (530 aa)) is membrane (anion exchange). The Extracellular segment spans residues 844-893 (FQEHPLHGCSVSNDSEADSSSNNMTWAATTLAPDNSSASGQERPRGQPNT). N-linked (GlcNAc...) asparagine glycans are attached at residues asparagine 856, asparagine 866, and asparagine 878. Residues 894–911 (ALLSLVLMAGTFFIAFFL) traverse the membrane as a helical segment. The Cytoplasmic portion of the chain corresponds to 912-926 (RKFKNSRFFPGRIRR). A run of 5 helical transmembrane segments spans residues 927 to 947 (VIGD…DYSI), 981 to 1003 (PFPV…LIFM), 1029 to 1050 (LLLI…LAAA), 1084 to 1129 (VTGL…IQFY), and 1156 to 1192 (MHLF…TVPL). Cysteine 1166 carries the S-palmitoyl cysteine lipid modification.

Belongs to the anion exchanger (TC 2.A.31) family. In terms of tissue distribution, expressed in the parotid and submandibular glands (at protein level). Expressed in the gastric mucosa (at protein level). Expressed in the choroid plexus epithelium (at protein level). Expressed in the liver and gallbladder.

The protein resides in the apical cell membrane. Its subcellular location is the basolateral cell membrane. It carries out the reaction hydrogencarbonate(in) + chloride(out) = hydrogencarbonate(out) + chloride(in). With respect to regulation, inhibited by 4,4'-diisothiocyanatostilbene-2,2'-disulfonic acid (DIDS). Its function is as follows. Sodium-independent anion exchanger which mediates the electroneutral exchange of chloride for bicarbonate ions across the cell membrane. Plays an important role in osteoclast differentiation and function. Regulates bone resorption and calpain-dependent actin cytoskeleton organization in osteoclasts via anion exchange-dependent control of pH. Essential for intracellular pH regulation in CD8(+) T-cells upon CD3 stimulation, modulating CD8(+) T-cell responses. The sequence is that of Anion exchange protein 2 (Slc4a2) from Rattus norvegicus (Rat).